The sequence spans 550 residues: Acyl-CoA-dependent acyltransferase MAC2 (550 aa).

The protein belongs to the trichothecene O-acetyltransferase family.

Its pathway is secondary metabolite biosynthesis. Functionally, acyl-CoA-dependent acyltransferase; part of the gene cluster that mediates the biosynthesis of mannosylerythritol lipids (MELs), surface-active substances that enhance the availability of water-insoluble substrates. Depending on the number of acetyl groups, mannosylerythritol lipids can be differentiated into MEL A (fully acetylated), MEL B and MEL C (monoacetylated at R-6 and R-4, respectively), and the fully deacetylated MEL D. The first step in the pathway is the generation of mannosylerythritol by the glycosyltransferase EMT1 which catalyzes the transfer of GDP-mannose to the C-4 atom of meso-erythritol. This reaction has to be stereospecific, since only mannosyl-D-erythritol is generated. The produced disaccharide is subsequently acylated with fatty acids of various lengths by the acyltransferases MAC1 and MAC2 at positions C-2 and C-3, repectively. The existence of MEL derivatives which carry an acetyl group at C-2 implies that at least MAC1 also accepts acetyl-CoA as a donor. The final step of MEL biosynthesis is the acetylation of the fully acylated mannosylerythritol lipids catalyzed by the acetyl-CoA-dependent acetyltransferase MAT1. MAT1 displays a relaxed regioselectivity and is able to transfer acetylgroups to both positions C-4 and C-6 of the mannosyl moiety. This is Acyl-CoA-dependent acyltransferase MAC2 from Pseudozyma antarctica (strain T-34) (Yeast).